Reading from the N-terminus, the 210-residue chain is N-(5'-phosphoribosyl)anthranilate isomerase (210 aa).

Belongs to the TrpF family.

The catalysed reaction is N-(5-phospho-beta-D-ribosyl)anthranilate = 1-(2-carboxyphenylamino)-1-deoxy-D-ribulose 5-phosphate. It functions in the pathway amino-acid biosynthesis; L-tryptophan biosynthesis; L-tryptophan from chorismate: step 3/5. In Pseudomonas fluorescens (strain ATCC BAA-477 / NRRL B-23932 / Pf-5), this protein is N-(5'-phosphoribosyl)anthranilate isomerase.